A 239-amino-acid chain; its full sequence is MDLRLIFGPTCTGKTSTAIALAQQTGLPVLSLDRVQCCPQLSTGSGRPTVEELKGTTRLYLDDRPLVKGIITAKQAHERLIAEVHNHEAKGGLILEGGSISLLRCMAQSRYWNADFRWHIIRNELADEESFMSVAKTRVKQMLRPSAGLSIIQELVQLWREPRLRPILEGIDGYRYALLFATQNQITPDMLLQLDADMENKLIHGIAQEFLIHARRQEQKFPLVGATAVEAFEGPPFRM.

It belongs to the isopentenyl transferase family.

It carries out the reaction dimethylallyl diphosphate + AMP = N(6)-(dimethylallyl)adenosine 5'-phosphate + diphosphate. In terms of biological role, transfers dimethylallyl groups to AMP as part of the biosynthesis of cytokinin phytohormones. This chain is Adenylate dimethylallyltransferase (ipt), found in Rhizobium radiobacter (Agrobacterium tumefaciens).